Reading from the N-terminus, the 427-residue chain is Glutamate-1-semialdehyde 2,1-aminomutase (427 aa).

Lys265 is modified (N6-(pyridoxal phosphate)lysine).

The protein belongs to the class-III pyridoxal-phosphate-dependent aminotransferase family. HemL subfamily. In terms of assembly, homodimer. Pyridoxal 5'-phosphate is required as a cofactor.

The protein localises to the cytoplasm. The catalysed reaction is (S)-4-amino-5-oxopentanoate = 5-aminolevulinate. The protein operates within porphyrin-containing compound metabolism; protoporphyrin-IX biosynthesis; 5-aminolevulinate from L-glutamyl-tRNA(Glu): step 2/2. In Edwardsiella ictaluri (strain 93-146), this protein is Glutamate-1-semialdehyde 2,1-aminomutase.